The chain runs to 231 residues: Uracil-DNA glycosylase (231 aa).

Asp74 (proton acceptor) is an active-site residue.

The protein belongs to the uracil-DNA glycosylase (UDG) superfamily. UNG family.

It localises to the cytoplasm. It catalyses the reaction Hydrolyzes single-stranded DNA or mismatched double-stranded DNA and polynucleotides, releasing free uracil.. Its function is as follows. Excises uracil residues from the DNA which can arise as a result of misincorporation of dUMP residues by DNA polymerase or due to deamination of cytosine. This Campylobacter jejuni subsp. doylei (strain ATCC BAA-1458 / RM4099 / 269.97) protein is Uracil-DNA glycosylase.